Consider the following 340-residue polypeptide: Tryptophan--tRNA ligase (340 aa).

Residues 11–13 (RPT) and 19–20 (GH) each bind ATP. Residues 12–20 (PTGKLHLGH) carry the 'HIGH' region motif. Asp140 lines the L-tryptophan pocket. ATP is bound by residues 152-154 (GND), Leu194, and 202-206 (KMSKS). Positions 202–206 (KMSKS) match the 'KMSKS' region motif.

Belongs to the class-I aminoacyl-tRNA synthetase family. In terms of assembly, homodimer.

The protein localises to the cytoplasm. The enzyme catalyses tRNA(Trp) + L-tryptophan + ATP = L-tryptophyl-tRNA(Trp) + AMP + diphosphate + H(+). Catalyzes the attachment of tryptophan to tRNA(Trp). This is Tryptophan--tRNA ligase from Streptococcus pyogenes serotype M1.